The chain runs to 338 residues: MLSPTFVLWDVGYPLYTYGSICIIALIIWQVKKSCQKLSLVPNRSCCRCHRRVQQKSGDRTSRARRTSQEEAEKLWKLLFLMKSQGWLPQEGSVRRILCADPCCQICNVMALEIKQLLAGENNQISLTSLGPSQGSSCLEALSTSSVSFKHSQDLGSPKSKELSLASVTPTLSQLMDQKSLTQSAARSAGADSVQDSWADHFQRGQRSQVPAVSQVMGSLSSNFEKPGIPLSQQERTKNNSKFVLENQEAPEVGLDNKMKLFLHWINPEMKDRRHEESILLSKAETVTQDRTKNIEKSPTVTKDHVWGATTQKTTEDPEAQPPSTEEEGLIFCDAPSA.

A helical transmembrane segment spans residues 7 to 29 (VLWDVGYPLYTYGSICIIALIIW). Ser152 is subject to Phosphoserine. The segment covering 290-306 (DRTKNIEKSPTVTKDHV) has biased composition (basic and acidic residues). A disordered region spans residues 290–338 (DRTKNIEKSPTVTKDHVWGATTQKTTEDPEAQPPSTEEEGLIFCDAPSA).

It belongs to the SPATA31 family.

The protein resides in the membrane. This chain is Protein SPATA31F3, found in Homo sapiens (Human).